We begin with the raw amino-acid sequence, 346 residues long: Anthranilate phosphoribosyltransferase (346 aa).

5-phospho-alpha-D-ribose 1-diphosphate-binding positions include Gly-88, Gly-91 to Asp-92, Thr-96, Asn-98 to Thr-101, Lys-116 to Ser-124, and Ala-128. Gly-88 is an anthranilate binding site. Ser-100 contributes to the Mg(2+) binding site. Asn-119 provides a ligand contact to anthranilate. Arg-174 contacts anthranilate. Residues Asp-233 and Glu-234 each coordinate Mg(2+).

It belongs to the anthranilate phosphoribosyltransferase family. In terms of assembly, homodimer. Requires Mg(2+) as cofactor.

The catalysed reaction is N-(5-phospho-beta-D-ribosyl)anthranilate + diphosphate = 5-phospho-alpha-D-ribose 1-diphosphate + anthranilate. It participates in amino-acid biosynthesis; L-tryptophan biosynthesis; L-tryptophan from chorismate: step 2/5. Functionally, catalyzes the transfer of the phosphoribosyl group of 5-phosphorylribose-1-pyrophosphate (PRPP) to anthranilate to yield N-(5'-phosphoribosyl)-anthranilate (PRA). In Paramagnetospirillum magneticum (strain ATCC 700264 / AMB-1) (Magnetospirillum magneticum), this protein is Anthranilate phosphoribosyltransferase.